We begin with the raw amino-acid sequence, 214 residues long: Large ribosomal subunit protein uL3 (214 aa).

Gln-153 carries the post-translational modification N5-methylglutamine.

It belongs to the universal ribosomal protein uL3 family. Part of the 50S ribosomal subunit. Forms a cluster with proteins L14 and L19. Methylated by PrmB.

Functionally, one of the primary rRNA binding proteins, it binds directly near the 3'-end of the 23S rRNA, where it nucleates assembly of the 50S subunit. This Aromatoleum aromaticum (strain DSM 19018 / LMG 30748 / EbN1) (Azoarcus sp. (strain EbN1)) protein is Large ribosomal subunit protein uL3.